A 110-amino-acid chain; its full sequence is Nitrogenase-stabilizing/protective protein NifW (110 aa).

It belongs to the NifW family. As to quaternary structure, homotrimer; associates with NifD.

In terms of biological role, may protect the nitrogenase Fe-Mo protein from oxidative damage. The chain is Nitrogenase-stabilizing/protective protein NifW from Acidithiobacillus ferrooxidans (strain ATCC 23270 / DSM 14882 / CIP 104768 / NCIMB 8455) (Ferrobacillus ferrooxidans (strain ATCC 23270)).